The following is a 344-amino-acid chain: Probable aldo-keto reductase 1 (344 aa).

The Proton donor role is filled by Tyr63. His130 is a binding site for substrate. 209–219 (SPLGLGFFAAG) provides a ligand contact to NADP(+).

Belongs to the aldo/keto reductase family.

The sequence is that of Probable aldo-keto reductase 1 from Arabidopsis thaliana (Mouse-ear cress).